The following is a 494-amino-acid chain: DNA-directed DNA/RNA polymerase mu (494 aa).

Residues 1–24 form a disordered region; it reads MLPKRRRARVGSPSGDAASSTPPS. S12 carries the post-translational modification Phosphoserine. In terms of domain architecture, BRCT spans 22–122; that stretch reads PPSTRFPGVA…QPVPVECRHR (101 aa). The interval 323–332 is involved in ssDNA binding; that stretch reads RGKLQGHDVD. Residues D330, D332, and D418 each coordinate Mg(2+).

This sequence belongs to the DNA polymerase type-X family. The cofactor is Mg(2+). As to expression, expressed in a number of tissues. Abundant in thymus.

The protein resides in the nucleus. It carries out the reaction DNA(n) + a 2'-deoxyribonucleoside 5'-triphosphate = DNA(n+1) + diphosphate. Functionally, gap-filling polymerase involved in repair of DNA double-strand breaks by non-homologous end joining (NHEJ). Participates in immunoglobulin (Ig) light chain gene rearrangement in V(D)J recombination. The chain is DNA-directed DNA/RNA polymerase mu (POLM) from Homo sapiens (Human).